A 221-amino-acid chain; its full sequence is Pre-rRNA-processing protein SRD1 (221 aa).

Over residues 101-110 (SKNRVTSACN) the composition is skewed to polar residues. Disordered stretches follow at residues 101–121 (SKNR…QEAN) and 137–161 (ASIT…TILP). The segment covering 142 to 155 (KYSKKTTSRPKREK) has biased composition (basic residues). A GATA-type zinc finger spans residues 168 to 193 (CSKCKDTWTIQWRSGPDQNRELCSPC). A disordered region spans residues 201-221 (LKKENEKKRQAADKRIDRNNP). Residues 203–221 (KENEKKRQAADKRIDRNNP) are compositionally biased toward basic and acidic residues.

The protein resides in the cytoplasm. The protein localises to the nucleus. Plays a direct or indirect role in pre-rRNA processing. The chain is Pre-rRNA-processing protein SRD1 (SRD1) from Saccharomyces cerevisiae (strain ATCC 204508 / S288c) (Baker's yeast).